Here is a 342-residue protein sequence, read N- to C-terminus: UDP-N-acetylglucosamine--N-acetylmuramyl-(pentapeptide) pyrophosphoryl-undecaprenol N-acetylglucosamine transferase (342 aa).

UDP-N-acetyl-alpha-D-glucosamine contacts are provided by residues 10 to 12, N124, S177, and Q275; that span reads TGG.

Belongs to the glycosyltransferase 28 family. MurG subfamily.

The protein resides in the cell inner membrane. The enzyme catalyses di-trans,octa-cis-undecaprenyl diphospho-N-acetyl-alpha-D-muramoyl-L-alanyl-D-glutamyl-meso-2,6-diaminopimeloyl-D-alanyl-D-alanine + UDP-N-acetyl-alpha-D-glucosamine = di-trans,octa-cis-undecaprenyl diphospho-[N-acetyl-alpha-D-glucosaminyl-(1-&gt;4)]-N-acetyl-alpha-D-muramoyl-L-alanyl-D-glutamyl-meso-2,6-diaminopimeloyl-D-alanyl-D-alanine + UDP + H(+). The protein operates within cell wall biogenesis; peptidoglycan biosynthesis. Functionally, cell wall formation. Catalyzes the transfer of a GlcNAc subunit on undecaprenyl-pyrophosphoryl-MurNAc-pentapeptide (lipid intermediate I) to form undecaprenyl-pyrophosphoryl-MurNAc-(pentapeptide)GlcNAc (lipid intermediate II). The sequence is that of UDP-N-acetylglucosamine--N-acetylmuramyl-(pentapeptide) pyrophosphoryl-undecaprenol N-acetylglucosamine transferase from Campylobacter jejuni subsp. jejuni serotype O:2 (strain ATCC 700819 / NCTC 11168).